Reading from the N-terminus, the 360-residue chain is Peptide chain release factor 1 (360 aa).

An N5-methylglutamine modification is found at glutamine 235.

This sequence belongs to the prokaryotic/mitochondrial release factor family. Methylated by PrmC. Methylation increases the termination efficiency of RF1.

It localises to the cytoplasm. Its function is as follows. Peptide chain release factor 1 directs the termination of translation in response to the peptide chain termination codons UAG and UAA. This Cupriavidus pinatubonensis (strain JMP 134 / LMG 1197) (Cupriavidus necator (strain JMP 134)) protein is Peptide chain release factor 1.